Consider the following 211-residue polypeptide: Large ribosomal subunit protein bL25 (211 aa).

Basic and acidic residues predominate over residues 1–18; the sequence is MAKTHEIKAERRADEGKG. The disordered stretch occupies residues 1–20; sequence MAKTHEIKAERRADEGKGAS.

The protein belongs to the bacterial ribosomal protein bL25 family. CTC subfamily. As to quaternary structure, part of the 50S ribosomal subunit; part of the 5S rRNA/L5/L18/L25 subcomplex. Contacts the 5S rRNA. Binds to the 5S rRNA independently of L5 and L18.

In terms of biological role, this is one of the proteins that binds to the 5S RNA in the ribosome where it forms part of the central protuberance. The sequence is that of Large ribosomal subunit protein bL25 from Xanthomonas oryzae pv. oryzae (strain MAFF 311018).